Reading from the N-terminus, the 1149-residue chain is Guanine nucleotide exchange factor DBS (1149 aa).

One can recognise a CRAL-TRIO domain in the interval M52 to H224. The stretch at H355–L454 is one Spectrin repeat. S457, S462, S471, and S480 each carry phosphoserine. Positions L503–D528 form a coiled coil. The disordered stretch occupies residues K555 to E627. Over residues P583–S594 the composition is skewed to low complexity. Positions A607–Q616 are enriched in basic and acidic residues. At S621 the chain carries Phosphoserine. At T622 the chain carries Phosphothreonine. Residues L632–S812 enclose the DH domain. The PH domain occupies K830–T946. The tract at residues S956 to S1033 is disordered. Positions S964 to T978 are enriched in low complexity. S1033, S1034, S1041, and S1042 each carry phosphoserine. Residues L1055 to G1116 form the SH3 domain.

It belongs to the MCF2 family. In terms of assembly, interacts with GTP-bound RAC1. Interacts with CDC42. Interacts with RHOA. Interacts with CCPG1, which results in specific inhibition of its exchange activity toward RHOA, but does not affect its activity on CDC42. Mainly phosphorylated on serine. Highest expression in the brain, where it is found in neurons and alpha-tanycytes (at protein level). Detected in brain, and at lower levels in the heart.

It localises to the cytoplasm. It is found in the cell membrane. In terms of biological role, guanine nucleotide exchange factor that catalyzes guanine nucleotide exchange on RHOA and CDC42, and thereby contributes to the regulation of RHOA and CDC42 signaling pathways. Seems to lack activity with RAC1. Becomes activated and highly tumorigenic by truncation of the N-terminus. The protein is Guanine nucleotide exchange factor DBS (Mcf2l) of Rattus norvegicus (Rat).